Reading from the N-terminus, the 414-residue chain is Glycogen synthase (414 aa).

The protein belongs to the glycosyltransferase group 1 family.

It catalyses the reaction [(1-&gt;4)-alpha-D-glucosyl](n) + UDP-alpha-D-glucose = [(1-&gt;4)-alpha-D-glucosyl](n+1) + UDP + H(+). The protein operates within glycan biosynthesis; glycogen biosynthesis. In terms of biological role, glucosyltransferase that uses UDP-glucose as the sugar donor to elongate alpha-(1-&gt;4)-glucans. Is involved in the biosynthesis of both 6-O-methylglucosyl lipopolysaccharides (MGLP) and glycogen. May also use ADP-glucose as substrate. The sequence is that of Glycogen synthase from Mycobacterium tuberculosis (strain CDC 1551 / Oshkosh).